The sequence spans 232 residues: Ubiquinone biosynthesis O-methyltransferase (232 aa).

S-adenosyl-L-methionine contacts are provided by Arg-36, Gly-55, Asp-76, and Met-120.

This sequence belongs to the methyltransferase superfamily. UbiG/COQ3 family.

The enzyme catalyses a 3-demethylubiquinol + S-adenosyl-L-methionine = a ubiquinol + S-adenosyl-L-homocysteine + H(+). It catalyses the reaction a 3-(all-trans-polyprenyl)benzene-1,2-diol + S-adenosyl-L-methionine = a 2-methoxy-6-(all-trans-polyprenyl)phenol + S-adenosyl-L-homocysteine + H(+). The protein operates within cofactor biosynthesis; ubiquinone biosynthesis. Its function is as follows. O-methyltransferase that catalyzes the 2 O-methylation steps in the ubiquinone biosynthetic pathway. This is Ubiquinone biosynthesis O-methyltransferase from Burkholderia multivorans (strain ATCC 17616 / 249).